The sequence spans 503 residues: D-alanine--D-alanyl carrier protein ligase (503 aa).

151–152 (TS) provides a ligand contact to ATP. D-alanine is bound at residue Asp-196. 291-296 (NTYGPT) contacts ATP. Position 300 (Val-300) interacts with D-alanine. ATP-binding residues include Asp-382 and Lys-491. D-alanine is bound at residue Lys-491.

The protein belongs to the ATP-dependent AMP-binding enzyme family. DltA subfamily.

It is found in the cytoplasm. It catalyses the reaction holo-[D-alanyl-carrier protein] + D-alanine + ATP = D-alanyl-[D-alanyl-carrier protein] + AMP + diphosphate. It participates in cell wall biogenesis; lipoteichoic acid biosynthesis. Functionally, catalyzes the first step in the D-alanylation of lipoteichoic acid (LTA), the activation of D-alanine and its transfer onto the D-alanyl carrier protein (Dcp) DltC. In an ATP-dependent two-step reaction, forms a high energy D-alanyl-AMP intermediate, followed by transfer of the D-alanyl residue as a thiol ester to the phosphopantheinyl prosthetic group of the Dcp. D-alanylation of LTA plays an important role in modulating the properties of the cell wall in Gram-positive bacteria, influencing the net charge of the cell wall. The sequence is that of D-alanine--D-alanyl carrier protein ligase from Bacillus velezensis (strain DSM 23117 / BGSC 10A6 / LMG 26770 / FZB42) (Bacillus amyloliquefaciens subsp. plantarum).